Reading from the N-terminus, the 252-residue chain is Probable transcriptional regulatory protein Cagg_2594 (252 aa).

Basic residues predominate over residues 1–14 (MSGHSKWHTIRRAK). The disordered stretch occupies residues 1 to 22 (MSGHSKWHTIRRAKSANDQRRG).

This sequence belongs to the TACO1 family.

The protein localises to the cytoplasm. The polypeptide is Probable transcriptional regulatory protein Cagg_2594 (Chloroflexus aggregans (strain MD-66 / DSM 9485)).